Reading from the N-terminus, the 103-residue chain is Large ribosomal subunit protein bL21 (103 aa).

The protein belongs to the bacterial ribosomal protein bL21 family. As to quaternary structure, part of the 50S ribosomal subunit. Contacts protein L20.

Its function is as follows. This protein binds to 23S rRNA in the presence of protein L20. The polypeptide is Large ribosomal subunit protein bL21 (Serratia proteamaculans (strain 568)).